A 276-amino-acid polypeptide reads, in one-letter code: Diaminopimelate epimerase (276 aa).

3 residues coordinate substrate: N13, Q46, and N66. C75 functions as the Proton donor in the catalytic mechanism. Substrate is bound by residues 76 to 77, N159, N192, and 210 to 211; these read GN and ER. Residue C219 is the Proton acceptor of the active site. 220-221 serves as a coordination point for substrate; that stretch reads GT.

The protein belongs to the diaminopimelate epimerase family. In terms of assembly, homodimer.

It localises to the cytoplasm. It catalyses the reaction (2S,6S)-2,6-diaminopimelate = meso-2,6-diaminopimelate. The protein operates within amino-acid biosynthesis; L-lysine biosynthesis via DAP pathway; DL-2,6-diaminopimelate from LL-2,6-diaminopimelate: step 1/1. Catalyzes the stereoinversion of LL-2,6-diaminopimelate (L,L-DAP) to meso-diaminopimelate (meso-DAP), a precursor of L-lysine and an essential component of the bacterial peptidoglycan. In Hahella chejuensis (strain KCTC 2396), this protein is Diaminopimelate epimerase.